Consider the following 317-residue polypeptide: Probable GTP 3',8-cyclase (317 aa).

The Radical SAM core domain occupies 4–223 (RYGRPLEDLR…KSEIREKHFR (220 aa)). Arg-13 is a binding site for GTP. Residues Cys-20, Cys-24, and Cys-27 each contribute to the [4Fe-4S] cluster site. Lys-61 is a GTP binding site. Gly-65 is an S-adenosyl-L-methionine binding site. Thr-91 provides a ligand contact to GTP. S-adenosyl-L-methionine is bound at residue Ser-115. Residue Lys-152 coordinates GTP. 2 residues coordinate [4Fe-4S] cluster: Cys-246 and Cys-249. Residue 251-253 (RVR) coordinates GTP. Position 263 (Cys-263) interacts with [4Fe-4S] cluster.

The protein belongs to the radical SAM superfamily. MoaA family. Requires [4Fe-4S] cluster as cofactor.

It catalyses the reaction GTP + AH2 + S-adenosyl-L-methionine = (8S)-3',8-cyclo-7,8-dihydroguanosine 5'-triphosphate + 5'-deoxyadenosine + L-methionine + A + H(+). Its pathway is cofactor biosynthesis; molybdopterin biosynthesis. Catalyzes the cyclization of GTP to (8S)-3',8-cyclo-7,8-dihydroguanosine 5'-triphosphate. The chain is Probable GTP 3',8-cyclase from Metallosphaera sedula (strain ATCC 51363 / DSM 5348 / JCM 9185 / NBRC 15509 / TH2).